Consider the following 448-residue polypeptide: Alginate biosynthesis transcriptional regulatory protein AlgB (448 aa).

The Response regulatory domain maps to 10–124 (RILLVDDESA…QLRLATAKQL (115 aa)). Asp-59 is modified (4-aspartylphosphate). A Sigma-54 factor interaction domain is found at 147-376 (LDSHSPAMMA…LRNVVERASI (230 aa)). Residues 175-182 (GESGTGKG) and 238-247 (ADGGTLFLDE) each bind ATP. The H-T-H motif DNA-binding region spans 425–444 (LDQAAKTLGIDASTLYRKRK).

Its pathway is glycan biosynthesis; alginate biosynthesis [regulation]. In terms of biological role, positive regulator of the alginate biosynthetic gene algD. The chain is Alginate biosynthesis transcriptional regulatory protein AlgB (algB) from Pseudomonas putida (strain ATCC 47054 / DSM 6125 / CFBP 8728 / NCIMB 11950 / KT2440).